The following is a 249-amino-acid chain: DNA repair protein RecO (249 aa).

The protein belongs to the RecO family.

In terms of biological role, involved in DNA repair and RecF pathway recombination. The protein is DNA repair protein RecO of Mycoplasma capricolum subsp. capricolum (strain California kid / ATCC 27343 / NCTC 10154).